The primary structure comprises 127 residues: Methylglyoxal synthase (127 aa).

Positions methionine 1–aspartate 127 constitute an MGS-like domain. Substrate is bound by residues histidine 12, lysine 16, threonine 38–threonine 41, and serine 59–glycine 60. The Proton donor/acceptor role is filled by aspartate 65. Histidine 92 lines the substrate pocket.

The protein belongs to the methylglyoxal synthase family.

The catalysed reaction is dihydroxyacetone phosphate = methylglyoxal + phosphate. In terms of biological role, catalyzes the formation of methylglyoxal from dihydroxyacetone phosphate. In Agrobacterium fabrum (strain C58 / ATCC 33970) (Agrobacterium tumefaciens (strain C58)), this protein is Methylglyoxal synthase.